We begin with the raw amino-acid sequence, 1466 residues long: Immediate-early protein 2 (1466 aa).

Disordered regions lie at residues 1 to 21, 223 to 242, 339 to 370, 428 to 472, 517 to 965, 1005 to 1068, 1086 to 1179, and 1191 to 1223; these read MEPA…MQDY, NRGY…GGNG, YNHP…RGNQ, RCRS…VTKA, RSKT…TSIN, FRPH…CRSN, SRTR…SENA, and TTSH…DSSI. Residues 339-350 show a composition bias toward polar residues; that stretch reads YNHPTKAQTIPE. Residues 428–437 are compositionally biased toward basic residues; the sequence is RCRSVQKKKE. Basic and acidic residues-rich tracts occupy residues 443–472 and 536–553; these read NKHD…VTKA and PTKD…DNYP. Polar residues-rich tracts occupy residues 583-595 and 640-665; these read KNVS…TSPK and KNHT…PTAF. Low complexity predominate over residues 666-681; it reads NKSNNNKSITNSTSNS. The span at 696-713 shows a compositional bias: basic and acidic residues; the sequence is NESKDPNRTCGKNSDKHL. Low complexity-rich tracts occupy residues 720–756 and 763–772; these read ASKR…SSRA and RASSRAPSRA. A compositionally biased stretch (basic and acidic residues) spans 773–790; that stretch reads SSRDSSRASSRDSSRDSN. A compositionally biased stretch (low complexity) spans 791 to 800; the sequence is RASSKASSRA. The span at 801–814 shows a compositional bias: basic and acidic residues; it reads SSRDSSRASSRDSS. Composition is skewed to low complexity over residues 826–884 and 926–940; these read SRAS…SSRA. Residues 955–965 are compositionally biased toward polar residues; that stretch reads RQTPPHDTSIN. Residues 989-1037 are interaction with human UBE2I; the sequence is ARLQCFNHNDQFYNPRFRPHIRTNRKKSESTNDTDSESSMSRCKSHCRN. Low complexity-rich tracts occupy residues 1019-1029, 1053-1068, and 1086-1110; these read TNDTDSESSMS, GSSS…CRSN, and SRTR…STLK. A compositionally biased stretch (basic and acidic residues) spans 1116-1131; that stretch reads QNRDNKQIKSKSDSKH. The span at 1162–1177 shows a compositional bias: polar residues; the sequence is HNSSPFNTHEQSNHSE. Residues 1195-1213 show a composition bias toward basic residues; the sequence is LHQKQNVKLHNTKKCKKKR.

Belongs to the herpesviridae IE2 family. Interacts with human UBE2I in the nucleus. Although this interaction does not promote IE2 sumoylation, it represses transactivation activity.

It is found in the host nucleus. Transcriptional transactivator. The polypeptide is Immediate-early protein 2 (U90/U86) (Homo sapiens (Human)).